Reading from the N-terminus, the 361-residue chain is 3-dehydroquinate synthase (361 aa).

NAD(+)-binding positions include 71–76 (DGEQNK), 105–109 (GVIGD), 129–130 (TT), Lys142, Lys151, and 169–172 (CLNT). Glu184, His247, and His264 together coordinate Zn(2+).

This sequence belongs to the sugar phosphate cyclases superfamily. Dehydroquinate synthase family. Requires Co(2+) as cofactor. It depends on Zn(2+) as a cofactor. NAD(+) serves as cofactor.

It localises to the cytoplasm. The enzyme catalyses 7-phospho-2-dehydro-3-deoxy-D-arabino-heptonate = 3-dehydroquinate + phosphate. The protein operates within metabolic intermediate biosynthesis; chorismate biosynthesis; chorismate from D-erythrose 4-phosphate and phosphoenolpyruvate: step 2/7. In terms of biological role, catalyzes the conversion of 3-deoxy-D-arabino-heptulosonate 7-phosphate (DAHP) to dehydroquinate (DHQ). The chain is 3-dehydroquinate synthase from Sodalis glossinidius (strain morsitans).